Consider the following 234-residue polypeptide: Large ribosomal subunit protein uL1 (234 aa).

This sequence belongs to the universal ribosomal protein uL1 family. Part of the 50S ribosomal subunit.

In terms of biological role, binds directly to 23S rRNA. The L1 stalk is quite mobile in the ribosome, and is involved in E site tRNA release. Protein L1 is also a translational repressor protein, it controls the translation of the L11 operon by binding to its mRNA. This is Large ribosomal subunit protein uL1 from Erwinia tasmaniensis (strain DSM 17950 / CFBP 7177 / CIP 109463 / NCPPB 4357 / Et1/99).